Here is a 236-residue protein sequence, read N- to C-terminus: Uridylate kinase (236 aa).

An ATP-binding site is contributed by 12 to 15 (KLSG). The tract at residues 20 to 25 (GEKGFG) is involved in allosteric activation by GTP. UMP is bound at residue glycine 54. ATP is bound by residues glycine 55 and arginine 59. Residues aspartate 72 and 133 to 140 (TGNPYFST) contribute to the UMP site. The ATP site is built by asparagine 161, tyrosine 166, and aspartate 169.

It belongs to the UMP kinase family. As to quaternary structure, homohexamer.

The protein resides in the cytoplasm. It catalyses the reaction UMP + ATP = UDP + ADP. The protein operates within pyrimidine metabolism; CTP biosynthesis via de novo pathway; UDP from UMP (UMPK route): step 1/1. Allosterically activated by GTP. Inhibited by UTP. Catalyzes the reversible phosphorylation of UMP to UDP. This chain is Uridylate kinase, found in Alkaliphilus oremlandii (strain OhILAs) (Clostridium oremlandii (strain OhILAs)).